Here is a 505-residue protein sequence, read N- to C-terminus: Cobyric acid synthase (505 aa).

The 194-residue stretch at 251-444 (DIDVAVIKLP…IHGIFDNSEF (194 aa)) folds into the GATase cobBQ-type domain. Residue C332 is the Nucleophile of the active site. H436 is a catalytic residue.

The protein belongs to the CobB/CobQ family. CobQ subfamily.

The protein operates within cofactor biosynthesis; adenosylcobalamin biosynthesis. Functionally, catalyzes amidations at positions B, D, E, and G on adenosylcobyrinic A,C-diamide. NH(2) groups are provided by glutamine, and one molecule of ATP is hydrogenolyzed for each amidation. This Clostridium novyi (strain NT) protein is Cobyric acid synthase.